We begin with the raw amino-acid sequence, 367 residues long: NADH-quinone oxidoreductase subunit D (367 aa).

The protein belongs to the complex I 49 kDa subunit family. In terms of assembly, NDH-1 is composed of 14 different subunits. Subunits NuoB, C, D, E, F, and G constitute the peripheral sector of the complex.

The protein resides in the cell inner membrane. The enzyme catalyses a quinone + NADH + 5 H(+)(in) = a quinol + NAD(+) + 4 H(+)(out). NDH-1 shuttles electrons from NADH, via FMN and iron-sulfur (Fe-S) centers, to quinones in the respiratory chain. The immediate electron acceptor for the enzyme in this species is believed to be ubiquinone. Couples the redox reaction to proton translocation (for every two electrons transferred, four hydrogen ions are translocated across the cytoplasmic membrane), and thus conserves the redox energy in a proton gradient. The polypeptide is NADH-quinone oxidoreductase subunit D (Thermosipho melanesiensis (strain DSM 12029 / CIP 104789 / BI429)).